A 179-amino-acid chain; its full sequence is Large ribosomal subunit protein uL5 (179 aa).

It belongs to the universal ribosomal protein uL5 family. Part of the 50S ribosomal subunit; part of the 5S rRNA/L5/L18/L25 subcomplex. Contacts the 5S rRNA and the P site tRNA. Forms a bridge to the 30S subunit in the 70S ribosome.

Functionally, this is one of the proteins that bind and probably mediate the attachment of the 5S RNA into the large ribosomal subunit, where it forms part of the central protuberance. In the 70S ribosome it contacts protein S13 of the 30S subunit (bridge B1b), connecting the 2 subunits; this bridge is implicated in subunit movement. Contacts the P site tRNA; the 5S rRNA and some of its associated proteins might help stabilize positioning of ribosome-bound tRNAs. The polypeptide is Large ribosomal subunit protein uL5 (Macrococcus caseolyticus (strain JCSC5402) (Macrococcoides caseolyticum)).